The chain runs to 266 residues: F-box/kelch-repeat protein At4g39560 (266 aa).

Residues 24–70 (STQILSLPVDLLISILARVSRLDYPILSLVSKSFRSLIASPELYETR) form the F-box domain. Kelch repeat units lie at residues 130–176 (DIYN…VIDG), 178–223 (IYVA…KSAV), and 226–266 (EAIC…LLVA).

This Arabidopsis thaliana (Mouse-ear cress) protein is F-box/kelch-repeat protein At4g39560.